A 493-amino-acid chain; its full sequence is Probable plastidic glucose transporter 2 (493 aa).

The segment covering 1–14 has biased composition (polar residues); the sequence is MLGLQRETSSMYKR. Positions 1–24 are disordered; the sequence is MLGLQRETSSMYKRTSSRDYSPMI. 12 helical membrane-spanning segments follow: residues 52–72, 94–114, 128–148, 151–171, 182–202, 211–231, 293–313, 329–349, 356–376, 392–412, 424–444, and 450–470; these read LPHVLVATISSFLFGYHLGVV, LVVSVCLGGAFLGSLFSGGVA, LPMILGAFVSGVSNSLAVMLL, FLVGTGMGLGPPVAALYVTEV, SFIQIATCLGLMAALFIGIPV, VCFWLSTIPAALLALGMFLCA, VVFIGSTLFALQQLSGINAVF, LGNIFVGVSNLLGSVIAMVLM, LLLLWSFIGMAAAMALQVGAT, GTLVFVLTFALGAGPVPGLLL, AMAFCMSVHWVINFFVGLLFL, and LGPRLLYSMFSTFCLMAVMFV.

Belongs to the major facilitator superfamily. Sugar transporter (TC 2.A.1.1) family.

It is found in the plastid. Its subcellular location is the chloroplast membrane. May be involved in the efflux of glucose towards the cytosol. The polypeptide is Probable plastidic glucose transporter 2 (Arabidopsis thaliana (Mouse-ear cress)).